The primary structure comprises 254 residues: 3-deoxy-manno-octulosonate cytidylyltransferase (254 aa).

Belongs to the KdsB family.

The protein resides in the cytoplasm. The enzyme catalyses 3-deoxy-alpha-D-manno-oct-2-ulosonate + CTP = CMP-3-deoxy-beta-D-manno-octulosonate + diphosphate. It participates in nucleotide-sugar biosynthesis; CMP-3-deoxy-D-manno-octulosonate biosynthesis; CMP-3-deoxy-D-manno-octulosonate from 3-deoxy-D-manno-octulosonate and CTP: step 1/1. The protein operates within bacterial outer membrane biogenesis; lipopolysaccharide biosynthesis. Functionally, activates KDO (a required 8-carbon sugar) for incorporation into bacterial lipopolysaccharide in Gram-negative bacteria. This is 3-deoxy-manno-octulosonate cytidylyltransferase from Pseudomonas putida (strain GB-1).